Reading from the N-terminus, the 427-residue chain is Serine--tRNA ligase (427 aa).

231–233 lines the L-serine pocket; that stretch reads TAE. 262 to 264 is a binding site for ATP; it reads RSE. Residue Glu285 participates in L-serine binding. Position 349–352 (349–352) interacts with ATP; it reads EISS. An L-serine-binding site is contributed by Ser385.

It belongs to the class-II aminoacyl-tRNA synthetase family. Type-1 seryl-tRNA synthetase subfamily. Homodimer. The tRNA molecule binds across the dimer.

The protein resides in the cytoplasm. The catalysed reaction is tRNA(Ser) + L-serine + ATP = L-seryl-tRNA(Ser) + AMP + diphosphate + H(+). The enzyme catalyses tRNA(Sec) + L-serine + ATP = L-seryl-tRNA(Sec) + AMP + diphosphate + H(+). The protein operates within aminoacyl-tRNA biosynthesis; selenocysteinyl-tRNA(Sec) biosynthesis; L-seryl-tRNA(Sec) from L-serine and tRNA(Sec): step 1/1. Catalyzes the attachment of serine to tRNA(Ser). Is also able to aminoacylate tRNA(Sec) with serine, to form the misacylated tRNA L-seryl-tRNA(Sec), which will be further converted into selenocysteinyl-tRNA(Sec). The chain is Serine--tRNA ligase from Rhizobium rhizogenes (strain K84 / ATCC BAA-868) (Agrobacterium radiobacter).